The sequence spans 130 residues: Small ribosomal subunit protein uS8 (130 aa).

It belongs to the universal ribosomal protein uS8 family. As to quaternary structure, part of the 30S ribosomal subunit.

One of the primary rRNA binding proteins, it binds directly to 16S rRNA central domain where it helps coordinate assembly of the platform of the 30S subunit. In Methanococcoides burtonii (strain DSM 6242 / NBRC 107633 / OCM 468 / ACE-M), this protein is Small ribosomal subunit protein uS8.